The sequence spans 413 residues: MKIYAVGGAIRDALLGLPVRDRDYVVVGATPEQMAAQRFRPVGKDFPVFLHPDTHEEYALARTERKTAAGYHGFQFYYAPDVTLEQDLVRRDLTINAMAREVSPDGALVGPVVDPFGGQADLRAKLFRHVGDAFVEDPVRILRVARFAARFAEFAVAPDTAALMRAMVDAGEVDALVPERVWQELARGLMEAKPSRMFAVLRECGALARILPEIDALFGVPQRADYHPEVDTGVHVMMVIDHAAKQGYSLPVRFAALTHDLGKATTPADVLPRHIGHEGRSVDLLKPLCERLRVPNECRDLALVVAREHGNLHRVMEMGAAALVRLLERADALRKPARFAEALQASEADARGRLGLETKPYPQAERLRQALVAARAVDAGAIAQGLAGEPAKIRDAVHRARVRAVAQAVGVAD.

G8 and R11 together coordinate ATP. 2 residues coordinate CTP: G8 and R11. The Mg(2+) site is built by D21 and D23. ATP-binding residues include R91, R143, and R146. Residues R91, R143, and R146 each contribute to the CTP site. The HD domain occupies 232–333 (TGVHVMMVID…VRLLERADAL (102 aa)).

Belongs to the tRNA nucleotidyltransferase/poly(A) polymerase family. Bacterial CCA-adding enzyme type 1 subfamily. Monomer. Can also form homodimers and oligomers. Mg(2+) serves as cofactor. It depends on Ni(2+) as a cofactor.

The enzyme catalyses a tRNA precursor + 2 CTP + ATP = a tRNA with a 3' CCA end + 3 diphosphate. It carries out the reaction a tRNA with a 3' CCA end + 2 CTP + ATP = a tRNA with a 3' CCACCA end + 3 diphosphate. Catalyzes the addition and repair of the essential 3'-terminal CCA sequence in tRNAs without using a nucleic acid template. Adds these three nucleotides in the order of C, C, and A to the tRNA nucleotide-73, using CTP and ATP as substrates and producing inorganic pyrophosphate. tRNA 3'-terminal CCA addition is required both for tRNA processing and repair. Also involved in tRNA surveillance by mediating tandem CCA addition to generate a CCACCA at the 3' terminus of unstable tRNAs. While stable tRNAs receive only 3'-terminal CCA, unstable tRNAs are marked with CCACCA and rapidly degraded. This chain is Multifunctional CCA protein, found in Burkholderia pseudomallei (strain 668).